Here is a 546-residue protein sequence, read N- to C-terminus: Phosphatidylinositol 4-phosphate 5-kinase type-1 alpha (546 aa).

Positions 65–433 (TSSALKGAIQ…RFQRFMCNTV (369 aa)) constitute a PIPK domain. Residue K87 forms a Glycyl lysine isopeptide (Lys-Gly) (interchain with G-Cter in ubiquitin) linkage. Residues 441–522 (PSPTKKFRSG…PGPSFSPAVG (82 aa)) form a disordered region. Over residues 449-461 (SGPSFSRRSGPSG) the composition is skewed to low complexity. Residues 462–471 (NSCTPSQPTA) are compositionally biased toward polar residues. A compositionally biased stretch (basic and acidic residues) spans 473-493 (GEHKAQVTTKAEVEPDIHLGR).

As to quaternary structure, interacts with RAC1. Interacts with TUT1. Forms a complex with CDH1/E-cadherin, CTNNB1/beta-catenin and CTNND1 at the plasma membrane upon calcium stimulation. Found in a ternary complex with IRS1 and DGKZ in the absence of insulin stimulation. Interacts with DGKZ. Interacts with PIP4K2C; the interaction inhibits PIP5K1A kinase activity.

It is found in the cell membrane. The protein localises to the cytoplasm. Its subcellular location is the nucleus. The protein resides in the nucleus speckle. It localises to the cell projection. It is found in the ruffle. The protein localises to the lamellipodium. It catalyses the reaction a 1,2-diacyl-sn-glycero-3-phospho-(1D-myo-inositol 4-phosphate) + ATP = a 1,2-diacyl-sn-glycero-3-phospho-(1D-myo-inositol-4,5-bisphosphate) + ADP + H(+). The enzyme catalyses 1-octadecanoyl-2-(5Z,8Z,11Z,14Z)-eicosatetraenoyl-sn-glycero-3-phospho-1D-myo-inositol 4-phosphate + ATP = 1-octadecanoyl-2-(5Z,8Z,11Z,14Z)-eicosatetraenoyl-sn-glycero-3-phospho-1D-myo-inositol 4,5-bisphosphate + ADP + H(+). The catalysed reaction is 1,2-dihexadecanoyl-sn-glycero-3-phospho-(1D-myo-inositol-4-phosphate) + ATP = 1,2-dihexadecanoyl-sn-glycero-3-phospho-(1D-myo-inositol-4,5-bisphosphate) + ADP + H(+). It carries out the reaction 1-octadecanoyl-2-(9Z)-octadecenoyl-sn-glycero-3-phospho-1D-myo-inositol 4-phosphate + ATP = 1-octadecanoyl-2-(9Z)-octadecenoyl-sn-glycero-3-phospho-1D-myo-inositol 4,5-bisphosphate + ADP + H(+). It catalyses the reaction 1-octadecanoyl-2-(9Z)-octadecenoyl-sn-glycero-3-phospho-1D-myo-inositol + ATP = 1-octadecanoyl-2-(9Z)-octadecenoyl-sn-glycero-3-phospho-1D-myo-inositol 5-phosphate + ADP + H(+). The enzyme catalyses 1-octadecanoyl-2-(9Z,12Z)-octadecadienoyl-sn-glycero-3-phospho-1D-myo-inositol + ATP = 1-octadecanoyl-2-(9Z,12Z)-octadecadienoyl-sn-glycero-3-phospho-1D-myo-inositol 5-phosphate + ADP + H(+). The catalysed reaction is 1-octadecanoyl-2-(5Z,8Z,11Z,14Z-eicosatetraenoyl)-sn-glycero-3-phospho-(1D-myo-inositol) + ATP = 1-octadecanoyl-2-(5Z,8Z,11Z,14Z)-eicosatetraenoyl-sn-glycero-3-phospho-1D-myo-inositol 5-phosphate + ADP + H(+). It carries out the reaction 1,2-di-(9Z,12Z)-octadecadienoyl-sn-glycero-3-phospho-1D-myo-inositol + ATP = 1,2-di(9Z,12Z)-octadecadienoyl-sn-glycero-3-phospho-1D-myo-inositol 5-phosphate + ADP + H(+). Functionally, catalyzes the phosphorylation of phosphatidylinositol 4-phosphate (PtdIns(4)P/PI4P) to form phosphatidylinositol 4,5-bisphosphate (PtdIns(4,5)P2/PIP2), a lipid second messenger that regulates several cellular processes such as signal transduction, vesicle trafficking, actin cytoskeleton dynamics, cell adhesion, and cell motility. PtdIns(4,5)P2 can directly act as a second messenger or can be utilized as a precursor to generate other second messengers: inositol 1,4,5-trisphosphate (IP3), diacylglycerol (DAG) or phosphatidylinositol-3,4,5-trisphosphate (PtdIns(3,4,5)P3/PIP3). PIP5K1A-mediated phosphorylation of PtdIns(4)P is the predominant pathway for PtdIns(4,5)P2 synthesis. Can also use phosphatidylinositol (PtdIns) as substrate in vitro. Together with PIP5K1C, is required for phagocytosis, both enzymes regulating different types of actin remodeling at sequential steps. Promotes particle ingestion by activating the WAS GTPase-binding protein that induces Arp2/3 dependent actin polymerization at the nascent phagocytic cup. Together with PIP5K1B, is required, after stimulation by G-protein coupled receptors, for the synthesis of IP3 that will induce stable platelet adhesion. Recruited to the plasma membrane by the E-cadherin/beta-catenin complex where it provides the substrate PtdIns(4,5)P2 for the production of PtdIns(3,4,5)P3, IP3 and DAG, that will mobilize internal calcium and drive keratinocyte differentiation. Positively regulates insulin-induced translocation of SLC2A4 to the cell membrane in adipocytes. Together with PIP5K1C has a role during embryogenesis. Independently of its catalytic activity, is required for membrane ruffling formation, actin organization and focal adhesion formation during directional cell migration by controlling integrin-induced translocation of the small GTPase RAC1 to the plasma membrane. Also functions in the nucleus where it acts as an activator of TUT1 adenylyltransferase activity in nuclear speckles, thereby regulating mRNA polyadenylation of a select set of mRNAs. The sequence is that of Phosphatidylinositol 4-phosphate 5-kinase type-1 alpha from Rattus norvegicus (Rat).